The primary structure comprises 366 residues: MNISQIISYWGYPDEEYDIVTEDGYILGLYRIPYWRTDNNKNLAQRVVVYLQHGLLTSASSWISNLPNNSLGFILADAGYDVWMGNSRGNTWSRKHLYLETSSKEFWAFSFDEMAKYDLPASIDFTVKQTRQEEIFYVGHSQGTTIGFITFSTISKIAERIKIFFALAPVFSTKYLKSPLIRMTYKWKSIVMAFSGNKDFLPKTSFKKFIGSKLCPLQIFDKICLNILFMMFGYDPKNLNMSRLDVYFSHNPAGTSVQNMLHWSQLLNSTHLKAYDWGSPDLNLVHYNQTTSPLYNMTNMNVATAIWNGKSDLLADPEDVNILHSEITNHIYYKTISYYNHIDSLFGLDVYDQVYHEIIDIIQDNL.

Ser-141 acts as the Nucleophile in catalysis. Active-site charge relay system residues include Asp-312 and His-341.

The protein belongs to the AB hydrolase superfamily. Lipase family.

The chain is Lipase member J (LIPJ) from Homo sapiens (Human).